The following is a 302-amino-acid chain: Dehydrodolichyl diphosphate synthase 3 (302 aa).

Belongs to the UPP synthase family. The cofactor is Mg(2+).

It functions in the pathway protein modification; protein glycosylation. Catalyzes cis-prenyl chain elongation to produce the polyprenyl backbone of dolichol, a glycosyl carrier-lipid required for the biosynthesis of several classes of glycoprotein. The chain is Dehydrodolichyl diphosphate synthase 3 from Arabidopsis thaliana (Mouse-ear cress).